Here is a 342-residue protein sequence, read N- to C-terminus: Anthranilate phosphoribosyltransferase (342 aa).

5-phospho-alpha-D-ribose 1-diphosphate-binding positions include Gly81, 84 to 85, Thr89, 91 to 94, 109 to 117, and Thr121; these read GD, NIST, and KHGNRALSS. Gly81 is a binding site for anthranilate. Ser93 contributes to the Mg(2+) binding site. Anthranilate is bound at residue Asn112. Position 167 (Arg167) interacts with anthranilate. Mg(2+) contacts are provided by Asp225 and Glu226.

Belongs to the anthranilate phosphoribosyltransferase family. As to quaternary structure, homodimer. Mg(2+) is required as a cofactor.

The enzyme catalyses N-(5-phospho-beta-D-ribosyl)anthranilate + diphosphate = 5-phospho-alpha-D-ribose 1-diphosphate + anthranilate. It functions in the pathway amino-acid biosynthesis; L-tryptophan biosynthesis; L-tryptophan from chorismate: step 2/5. Functionally, catalyzes the transfer of the phosphoribosyl group of 5-phosphorylribose-1-pyrophosphate (PRPP) to anthranilate to yield N-(5'-phosphoribosyl)-anthranilate (PRA). This chain is Anthranilate phosphoribosyltransferase, found in Agrobacterium fabrum (strain C58 / ATCC 33970) (Agrobacterium tumefaciens (strain C58)).